Consider the following 675-residue polypeptide: DNA ligase (675 aa).

Residues 43–47 (DYEYD), 92–93 (SM), and Glu-122 contribute to the NAD(+) site. Lys-124 (N6-AMP-lysine intermediate) is an active-site residue. Arg-145, Glu-179, Lys-295, and Lys-319 together coordinate NAD(+). Cys-413, Cys-416, Cys-431, and Cys-436 together coordinate Zn(2+). One can recognise a BRCT domain in the interval 597 to 675 (SPDGYYKGKK…ETEAIAKFEQ (79 aa)).

Belongs to the NAD-dependent DNA ligase family. LigA subfamily. The cofactor is Mg(2+). Requires Mn(2+) as cofactor.

The enzyme catalyses NAD(+) + (deoxyribonucleotide)n-3'-hydroxyl + 5'-phospho-(deoxyribonucleotide)m = (deoxyribonucleotide)n+m + AMP + beta-nicotinamide D-nucleotide.. Its function is as follows. DNA ligase that catalyzes the formation of phosphodiester linkages between 5'-phosphoryl and 3'-hydroxyl groups in double-stranded DNA using NAD as a coenzyme and as the energy source for the reaction. It is essential for DNA replication and repair of damaged DNA. This chain is DNA ligase, found in Pediococcus pentosaceus (strain ATCC 25745 / CCUG 21536 / LMG 10740 / 183-1w).